Reading from the N-terminus, the 187-residue chain is Chlorobenzene dioxygenase subunit beta (187 aa).

The protein belongs to the bacterial ring-hydroxylating dioxygenase beta subunit family. This dioxygenase system consists of four proteins: the two subunits of the oxygenase component (TecA1 and TecA2), a ferredoxin (TecA3) and a ferredoxin reductase (TecA4).

The enzyme catalyses chlorobenzene + NADH + O2 + H(+) = (1R,2R)-3-chlorocyclohexa-3,5-diene-1,2-diol + NAD(+). The protein operates within aromatic compound metabolism. Its function is as follows. Part of the oxygenase component of the chlorobenzene dioxygenase system that catalyzes the dihydroxylation of a range of aromatic compounds, including chlorinated benzenes and toluenes, and dinuclear aromatics such as biphenyl and dibenzo-p-dioxin. The beta subunit is not directly involved in the control of substrate specificity. This is Chlorobenzene dioxygenase subunit beta from Cupriavidus sp. (strain PS12).